The sequence spans 341 residues: S-adenosylmethionine:tRNA ribosyltransferase-isomerase (341 aa).

It belongs to the QueA family. Monomer.

It localises to the cytoplasm. It catalyses the reaction 7-aminomethyl-7-carbaguanosine(34) in tRNA + S-adenosyl-L-methionine = epoxyqueuosine(34) in tRNA + adenine + L-methionine + 2 H(+). Its pathway is tRNA modification; tRNA-queuosine biosynthesis. Functionally, transfers and isomerizes the ribose moiety from AdoMet to the 7-aminomethyl group of 7-deazaguanine (preQ1-tRNA) to give epoxyqueuosine (oQ-tRNA). This is S-adenosylmethionine:tRNA ribosyltransferase-isomerase from Staphylococcus epidermidis (strain ATCC 12228 / FDA PCI 1200).